Here is a 378-residue protein sequence, read N- to C-terminus: Coiled-coil domain-containing protein 74A (378 aa).

Disordered regions lie at residues 1 to 52, 128 to 211, and 301 to 328; these read MSGA…RNLD, GGPS…EEPL, and EGSQ…PKVS. A compositionally biased stretch (polar residues) spans 34 to 44; sequence LRPQSPQLRQS. Residues 47–90 adopt a coiled-coil conformation; the sequence is QKRNLDLEKSLQFLQQQHSEMLAKLHEEIEHLKRENKDLHYKLI. Basic residues predominate over residues 141–151; that stretch reads RTHRPGGKRGR. Residues 165-182 show a composition bias toward polar residues; the sequence is DSLSMSSFQSVKSISNSG. Composition is skewed to basic and acidic residues over residues 194–205 and 314–323; these read QDSKADVSQKAD and SFPRDQEATH.

The protein is Coiled-coil domain-containing protein 74A (CCDC74A) of Homo sapiens (Human).